The chain runs to 88 residues: Cell division topological specificity factor (88 aa).

It belongs to the MinE family.

In terms of biological role, prevents the cell division inhibition by proteins MinC and MinD at internal division sites while permitting inhibition at polar sites. This ensures cell division at the proper site by restricting the formation of a division septum at the midpoint of the long axis of the cell. The protein is Cell division topological specificity factor of Aeromonas salmonicida (strain A449).